Consider the following 85-residue polypeptide: uncharacterized protein (85 aa).

The next 2 membrane-spanning stretches (helical) occupy residues 12-34 (ICLSVVTFSTSYSLDAGVVVLAF) and 49-71 (IPEFLWVTWQSFIKVLSLLNGFV).

It is found in the cell membrane. This is an uncharacterized protein from Archaeoglobus fulgidus (strain ATCC 49558 / DSM 4304 / JCM 9628 / NBRC 100126 / VC-16).